The sequence spans 220 residues: MAAERGLPPIELHRLGRRPYVPVWQAMREFTDTRDADSPDQFWLVEHDPVFTQGQAGKAEHLLMPGDIPVVATDRGGQVTYHGPGQVVLYPLIDVRRGKLGVRELVSALEQAVIDLLAAHGVTARARPDAPGVYVGETKIASLGLRIRRGASFHGVALNVDGDLAPFQCINPCGHAGMAMTRLVDLVDDCPGCEAVALELAECLARQLGRRLTPMDTVPA.

Residues 36-212 (ADSPDQFWLV…CLARQLGRRL (177 aa)) form the BPL/LPL catalytic domain. Substrate-binding positions include 75–82 (RGGQVTYH), 142–144 (SLG), and 155–157 (GVA). C173 acts as the Acyl-thioester intermediate in catalysis.

It belongs to the LipB family.

It is found in the cytoplasm. The catalysed reaction is octanoyl-[ACP] + L-lysyl-[protein] = N(6)-octanoyl-L-lysyl-[protein] + holo-[ACP] + H(+). It participates in protein modification; protein lipoylation via endogenous pathway; protein N(6)-(lipoyl)lysine from octanoyl-[acyl-carrier-protein]: step 1/2. In terms of biological role, catalyzes the transfer of endogenously produced octanoic acid from octanoyl-acyl-carrier-protein onto the lipoyl domains of lipoate-dependent enzymes. Lipoyl-ACP can also act as a substrate although octanoyl-ACP is likely to be the physiological substrate. In Chromohalobacter salexigens (strain ATCC BAA-138 / DSM 3043 / CIP 106854 / NCIMB 13768 / 1H11), this protein is Octanoyltransferase.